We begin with the raw amino-acid sequence, 145 residues long: Monooxygenase AacuP (145 aa).

It belongs to the avfA family.

Its pathway is secondary metabolite biosynthesis. Functionally, monooxygenase; part of the gene cluster that mediates the biosynthesis of the tetrahydroxanthone dimer secalonic acid D. The pathway begins with the synthesis of atrochrysone thioester by the polyketide synthase AacuL. The atrochrysone carboxyl ACP thioesterase AacuM then breaks the thioester bond and releases the atrochrysone carboxylic acid from AacuL. Atrochrysone carboxylic acid is decarboxylated by the decarboxylase AacuI, and oxidized by the anthrone oxygenase AacuG to yield emodin. Emodin is then reduced to emodin hydroquinone by a yet unidentified oxidoreductase. A-ring reduction by the short chain dehydrogenase AacuN, dehydration by the scytalone dehydratase-like protein AacuK and probable spontaneous re-oxidation, results in overall deoxygenation to chrysophanol. Baeyer-Villiger oxidation by the Baeyer-Villiger monooxygenase (BVMO) AacuH then yields monodictyphenone. Monodictyphenone is transformed into compounds with the tetrahydroxanthone skeleton via methylesterification by the methyltransferase AacuQ, followed by the action of the flavin-dependent monooxygenase AacuC, the isomerase AacuP, and the short chain dehydrogenase/reductase AacuF or AacuD. AacuF and AacuD should accept the same compound as a substrate but perform the ketoreduction with a different stereoselectivity, thus yielding blennolides B and A, respectively. In the final step of the biosynthesis, the cytochrome P450 monooxygenase AacuE accepts blennolide B and/or blennolide A to conduct the dimerization reaction to furnish the tetrahydroxanthone dimers, secalonic acids D, B, and F. The protein is Monooxygenase AacuP of Aspergillus aculeatus (strain ATCC 16872 / CBS 172.66 / WB 5094).